The primary structure comprises 253 residues: Glucosamine-6-phosphate deaminase (253 aa).

The active-site Proton acceptor; for enolization step is the Asp65. The active-site For ring-opening step is Asn133. The active-site Proton acceptor; for ring-opening step is His135. Catalysis depends on Glu140, which acts as the For ring-opening step.

The protein belongs to the glucosamine/galactosamine-6-phosphate isomerase family. NagB subfamily.

The catalysed reaction is alpha-D-glucosamine 6-phosphate + H2O = beta-D-fructose 6-phosphate + NH4(+). It participates in amino-sugar metabolism; N-acetylneuraminate degradation; D-fructose 6-phosphate from N-acetylneuraminate: step 5/5. Functionally, catalyzes the reversible isomerization-deamination of glucosamine 6-phosphate (GlcN6P) to form fructose 6-phosphate (Fru6P) and ammonium ion. The sequence is that of Glucosamine-6-phosphate deaminase from Corynebacterium glutamicum (strain R).